The following is a 412-amino-acid chain: Tryptophan synthase beta chain (412 aa).

Lys92 is modified (N6-(pyridoxal phosphate)lysine).

It belongs to the TrpB family. Tetramer of two alpha and two beta chains. The cofactor is pyridoxal 5'-phosphate.

The catalysed reaction is (1S,2R)-1-C-(indol-3-yl)glycerol 3-phosphate + L-serine = D-glyceraldehyde 3-phosphate + L-tryptophan + H2O. The protein operates within amino-acid biosynthesis; L-tryptophan biosynthesis; L-tryptophan from chorismate: step 5/5. Functionally, the beta subunit is responsible for the synthesis of L-tryptophan from indole and L-serine. The protein is Tryptophan synthase beta chain of Methylibium petroleiphilum (strain ATCC BAA-1232 / LMG 22953 / PM1).